A 504-amino-acid chain; its full sequence is Amidophosphoribosyltransferase (504 aa).

The active-site Nucleophile is the Cys2. The 234-residue stretch at 2–235 (CGIVGIVSQS…PGEAIYVTFE (234 aa)) folds into the Glutamine amidotransferase type-2 domain. Mg(2+) is bound by residues Thr305, Asp367, and Asp368.

This sequence in the C-terminal section; belongs to the purine/pyrimidine phosphoribosyltransferase family. Mg(2+) is required as a cofactor.

The enzyme catalyses 5-phospho-beta-D-ribosylamine + L-glutamate + diphosphate = 5-phospho-alpha-D-ribose 1-diphosphate + L-glutamine + H2O. Its pathway is purine metabolism; IMP biosynthesis via de novo pathway; N(1)-(5-phospho-D-ribosyl)glycinamide from 5-phospho-alpha-D-ribose 1-diphosphate: step 1/2. Its function is as follows. Catalyzes the formation of phosphoribosylamine from phosphoribosylpyrophosphate (PRPP) and glutamine. The chain is Amidophosphoribosyltransferase from Pasteurella multocida (strain Pm70).